The following is a 94-amino-acid chain: Co-chaperonin GroES (94 aa).

The protein belongs to the GroES chaperonin family. In terms of assembly, heptamer of 7 subunits arranged in a ring. Interacts with the chaperonin GroEL.

It localises to the cytoplasm. Its function is as follows. Together with the chaperonin GroEL, plays an essential role in assisting protein folding. The GroEL-GroES system forms a nano-cage that allows encapsulation of the non-native substrate proteins and provides a physical environment optimized to promote and accelerate protein folding. GroES binds to the apical surface of the GroEL ring, thereby capping the opening of the GroEL channel. The sequence is that of Co-chaperonin GroES from Clostridioides difficile (strain 630) (Peptoclostridium difficile).